Reading from the N-terminus, the 244-residue chain is Cysteine-rich secretory protein 2 (244 aa).

An N-terminal signal peptide occupies residues 1–21 (MALLPVVVFLITMLLPCVLTN). Positions 43–170 (NKHNQLRKSV…SLKYYYVCQY (128 aa)) constitute an SCP domain. 5 disulfide bridges follow: Cys-190/Cys-197, Cys-193/Cys-202, Cys-206/Cys-239, Cys-215/Cys-233, and Cys-224/Cys-237. A ShKT domain is found at 206–239 (CEYEDLLSNCESLKNTAGCEHQLLVEKCKATCRC).

The protein belongs to the CRISP family. As to quaternary structure, interacts with NSUN4 isoform 3. Testis.

It localises to the secreted. Functionally, may regulate some ion channels' activity and thereby regulate calcium fluxes during sperm capacitation. The protein is Cysteine-rich secretory protein 2 (CRISP2) of Cavia porcellus (Guinea pig).